Here is a 513-residue protein sequence, read N- to C-terminus: Na(+)/H(+) antiporter NhaB (513 aa).

The next 12 membrane-spanning stretches (helical) occupy residues Ile-21–Val-41, Gln-64–Val-84, Ile-88–Met-108, Leu-119–Phe-139, Phe-143–Val-163, Leu-202–Pro-222, Leu-243–Phe-263, Met-299–Ala-318, Ile-322–Gly-344, Pro-350–Leu-370, Leu-389–Gly-409, and Met-477–Leu-497.

This sequence belongs to the NhaB Na(+)/H(+) (TC 2.A.34) antiporter family.

It localises to the cell inner membrane. The enzyme catalyses 2 Na(+)(in) + 3 H(+)(out) = 2 Na(+)(out) + 3 H(+)(in). Its function is as follows. Na(+)/H(+) antiporter that extrudes sodium in exchange for external protons. The sequence is that of Na(+)/H(+) antiporter NhaB from Actinobacillus pleuropneumoniae serotype 3 (strain JL03).